The primary structure comprises 155 residues: Aspartate carbamoyltransferase regulatory chain (155 aa).

Zn(2+)-binding residues include Cys-113, Cys-118, Cys-139, and Cys-142.

Belongs to the PyrI family. Contains catalytic and regulatory chains. The cofactor is Zn(2+).

Involved in allosteric regulation of aspartate carbamoyltransferase. The polypeptide is Aspartate carbamoyltransferase regulatory chain (Methanospirillum hungatei JF-1 (strain ATCC 27890 / DSM 864 / NBRC 100397 / JF-1)).